The chain runs to 376 residues: Ribosomal RNA large subunit methyltransferase G (376 aa).

Belongs to the methyltransferase superfamily. RlmG family.

The protein resides in the cytoplasm. It carries out the reaction guanosine(1835) in 23S rRNA + S-adenosyl-L-methionine = N(2)-methylguanosine(1835) in 23S rRNA + S-adenosyl-L-homocysteine + H(+). In terms of biological role, specifically methylates the guanine in position 1835 (m2G1835) of 23S rRNA. This Klebsiella pneumoniae (strain 342) protein is Ribosomal RNA large subunit methyltransferase G.